A 421-amino-acid polypeptide reads, in one-letter code: ATP-dependent RNA helicase RhlB (421 aa).

A Q motif motif is present at residues 9-37 (QKFSDFALHPKVIEALENKGFHNCTPIQA). One can recognise a Helicase ATP-binding domain in the interval 40 to 219 (LPLTLAGRDV…FEQMNNAEYV (180 aa)). 53-60 (AQTGTGKT) is an ATP binding site. Positions 165-168 (DEAD) match the DEAD box motif. One can recognise a Helicase C-terminal domain in the interval 245 to 390 (RLLQTLIEEE…VSKYNPEALM (146 aa)). The segment at 393–421 (LPKPLRLTRSRPGNGPRRTGAPRNRRRSG) is disordered. The span at 403–414 (RPGNGPRRTGAP) shows a compositional bias: low complexity.

The protein belongs to the DEAD box helicase family. RhlB subfamily. As to quaternary structure, component of the RNA degradosome, which is a multiprotein complex involved in RNA processing and mRNA degradation.

The protein localises to the cytoplasm. The catalysed reaction is ATP + H2O = ADP + phosphate + H(+). Functionally, DEAD-box RNA helicase involved in RNA degradation. Has RNA-dependent ATPase activity and unwinds double-stranded RNA. In Citrobacter koseri (strain ATCC BAA-895 / CDC 4225-83 / SGSC4696), this protein is ATP-dependent RNA helicase RhlB.